A 283-amino-acid polypeptide reads, in one-letter code: Orotidine 5'-phosphate decarboxylase (283 aa).

Catalysis depends on Lys97, which acts as the Proton donor.

Belongs to the OMP decarboxylase family. Type 2 subfamily.

The enzyme catalyses orotidine 5'-phosphate + H(+) = UMP + CO2. It participates in pyrimidine metabolism; UMP biosynthesis via de novo pathway; UMP from orotate: step 2/2. This is Orotidine 5'-phosphate decarboxylase from Clostridium botulinum (strain Loch Maree / Type A3).